Consider the following 405-residue polypeptide: uncharacterized protein (405 aa).

Helical transmembrane passes span Ile3–Glu23, Gly42–Leu62, Pro73–Val93, Ile95–Ile115, Ser135–Ile155, Tyr162–Leu182, Ile209–Ile229, Lys248–Ile268, Gly280–Leu300, Leu309–Ile329, Thr346–Val366, and Phe377–Val397.

Belongs to the major facilitator superfamily. Bcr/CmlA family.

The protein localises to the cell inner membrane. This is an uncharacterized protein from Rickettsia felis (strain ATCC VR-1525 / URRWXCal2) (Rickettsia azadi).